Consider the following 243-residue polypeptide: Probable aquaporin SIP1-2 (243 aa).

Transmembrane regions (helical) follow at residues 12–32 and 42–62; these read VITF…AAIV and WAPL…FTVI. The short motif at 72–74 is the NPA 1 element; that stretch reads NPC. 3 helical membrane passes run 90 to 110, 135 to 155, and 162 to 182; these read FSLA…AITI, GAIS…LIIL, and LAKT…GSKF. The NPA 2 signature appears at 188–190; it reads NPA. Residues 210-230 form a helical membrane-spanning segment; sequence VYWISSYTGAILSAMLFRIIF.

The protein belongs to the MIP/aquaporin (TC 1.A.8) family. SIP (TC 1.A.8.10) subfamily. Expressed in roots and above ground. Expressed in elongating regions of the root tips, cotyledons, minor veins and hydathode cells of the rosette leaves. Weakly expressed in vascular tissues of the flower petals, filaments of stamens, upper part of the styles and receptacles of the siliques.

It is found in the endoplasmic reticulum membrane. Functionally, water channel required to facilitate the transport of water across cell membrane. The polypeptide is Probable aquaporin SIP1-2 (SIP1-2) (Arabidopsis thaliana (Mouse-ear cress)).